We begin with the raw amino-acid sequence, 209 residues long: UPF0502 protein PSHAa0076 (209 aa).

This sequence belongs to the UPF0502 family.

This Pseudoalteromonas translucida (strain TAC 125) protein is UPF0502 protein PSHAa0076.